A 512-amino-acid polypeptide reads, in one-letter code: D-alanine--D-alanyl carrier protein ligase (512 aa).

ATP is bound at residue 152-153 (TS). D199 contributes to the D-alanine binding site. 294 to 299 (NAYGPT) is a binding site for ATP. D-alanine is bound at residue V303. ATP is bound by residues D385, 397 to 400 (YGGR), and K499. K499 is a binding site for D-alanine.

The protein belongs to the ATP-dependent AMP-binding enzyme family. DltA subfamily.

The protein resides in the cytoplasm. The catalysed reaction is holo-[D-alanyl-carrier protein] + D-alanine + ATP = D-alanyl-[D-alanyl-carrier protein] + AMP + diphosphate. It participates in cell wall biogenesis; lipoteichoic acid biosynthesis. In terms of biological role, catalyzes the first step in the D-alanylation of lipoteichoic acid (LTA), the activation of D-alanine and its transfer onto the D-alanyl carrier protein (Dcp) DltC. In an ATP-dependent two-step reaction, forms a high energy D-alanyl-AMP intermediate, followed by transfer of the D-alanyl residue as a thiol ester to the phosphopantheinyl prosthetic group of the Dcp. D-alanylation of LTA plays an important role in modulating the properties of the cell wall in Gram-positive bacteria, influencing the net charge of the cell wall. This chain is D-alanine--D-alanyl carrier protein ligase, found in Streptococcus equi subsp. equi (strain 4047).